Reading from the N-terminus, the 129-residue chain is M-zodatoxin-Lt8j (129 aa).

The signal sequence occupies residues 1–20; it reads MKYFVVALALVAAFACIAES. The propeptide occupies 21-60; that stretch reads KPAESEHELAEVEEENELADLEDAVWLEHLADLSDLEEAR.

Belongs to the cationic peptide 06 (cytoinsectotoxin) family. In terms of tissue distribution, expressed by the venom gland.

The protein resides in the secreted. In terms of biological role, insecticidal, cytolytic and antimicrobial peptide. Forms voltage-dependent, ion-permeable channels in membranes. At high concentration causes cell membrane lysis. In Lachesana tarabaevi (Spider), this protein is M-zodatoxin-Lt8j (cit 1-9).